The primary structure comprises 774 residues: Multiple C2 domain and transmembrane region protein 11 (774 aa).

Gly residues predominate over residues 1 to 12 (MAVNGTGNGTGD). A disordered region spans residues 1–30 (MAVNGTGNGTGDGDFSLKETSPNIGNGGVN). 3 C2 domains span residues 9 to 145 (GTGD…PQWY), 184 to 307 (VTGE…SLWY), and 338 to 471 (LDES…THSY). Residues aspartate 62, asparagine 110, aspartate 112, and aspartate 118 each contribute to the Ca(2+) site. Helical transmembrane passes span 608–628 (LFVVFLPKYCVFSMLLYCFVF) and 722–742 (FVSCGVICFVSMKLLLTFLAF).

The protein belongs to the MCTP family. Ca(2+) serves as cofactor. Observed in flowers.

It localises to the endoplasmic reticulum membrane. Functionally, may function as a signaling molecule by regulating the trafficking of other regulators. The polypeptide is Multiple C2 domain and transmembrane region protein 11 (Arabidopsis thaliana (Mouse-ear cress)).